A 304-amino-acid chain; its full sequence is Putative S-adenosyl-L-methionine-dependent methyltransferase Mjls_1071 (304 aa).

Residues Asp130 and 159–160 (DL) each bind S-adenosyl-L-methionine.

Belongs to the UPF0677 family.

Exhibits S-adenosyl-L-methionine-dependent methyltransferase activity. The sequence is that of Putative S-adenosyl-L-methionine-dependent methyltransferase Mjls_1071 from Mycobacterium sp. (strain JLS).